Here is a 321-residue protein sequence, read N- to C-terminus: Protoheme IX farnesyltransferase (321 aa).

The next 10 membrane-spanning stretches (helical) occupy residues 28–48, 49–69, 94–114, 116–136, 149–169, 176–196, 222–242, 247–267, 277–297, and 300–320; these read VMSL…DPVH, PIVG…SGAL, VMPN…VFTL, IVAN…YVVI, IVIG…AATG, FILF…LALG, ILLY…LGFA, GMLS…VYIV, AKAL…EIVV, and LVPI…PGFF.

The protein belongs to the UbiA prenyltransferase family. Protoheme IX farnesyltransferase subfamily.

It localises to the cell inner membrane. It catalyses the reaction heme b + (2E,6E)-farnesyl diphosphate + H2O = Fe(II)-heme o + diphosphate. It participates in porphyrin-containing compound metabolism; heme O biosynthesis; heme O from protoheme: step 1/1. Its function is as follows. Converts heme B (protoheme IX) to heme O by substitution of the vinyl group on carbon 2 of heme B porphyrin ring with a hydroxyethyl farnesyl side group. This is Protoheme IX farnesyltransferase from Beijerinckia indica subsp. indica (strain ATCC 9039 / DSM 1715 / NCIMB 8712).